The chain runs to 270 residues: Mediator of RNA polymerase II transcription subunit 4 (270 aa).

Residues 1-25 (MAAASSGEKEKERPGGGLGAAGGNS) are disordered. At Ala-2 the chain carries N-acetylalanine. Coiled coils occupy residues 24-48 (NSTRERLLSALEDLEVLSRELIEML) and 90-131 (HHEM…AKEK). Residue Ser-32 is modified to Phosphoserine. The interval 231 to 270 (MLPPNHSHDFLLEPPGHNKENEDDVEVMSTDSSSSSSDSD) is disordered. Positions 236–250 (HSHDFLLEPPGHNKE) are enriched in basic and acidic residues. Positions 259–270 (STDSSSSSSDSD) are enriched in low complexity.

The protein belongs to the Mediator complex subunit 4 family. As to quaternary structure, component of the Mediator complex, which is composed of MED1, MED4, MED6, MED7, MED8, MED9, MED10, MED11, MED12, MED13, MED13L, MED14, MED15, MED16, MED17, MED18, MED19, MED20, MED21, MED22, MED23, MED24, MED25, MED26, MED27, MED29, MED30, MED31, CCNC, CDK8 and CDC2L6/CDK11. The MED12, MED13, CCNC and CDK8 subunits form a distinct module termed the CDK8 module. Mediator containing the CDK8 module is less active than Mediator lacking this module in supporting transcriptional activation. Individual preparations of the Mediator complex lacking one or more distinct subunits have been variously termed ARC, CRSP, DRIP, PC2, SMCC and TRAP.

It is found in the nucleus. In terms of biological role, component of the Mediator complex, a coactivator involved in the regulated transcription of nearly all RNA polymerase II-dependent genes. Mediator functions as a bridge to convey information from gene-specific regulatory proteins to the basal RNA polymerase II transcription machinery. Mediator is recruited to promoters by direct interactions with regulatory proteins and serves as a scaffold for the assembly of a functional preinitiation complex with RNA polymerase II and the general transcription factors. The protein is Mediator of RNA polymerase II transcription subunit 4 (MED4) of Bos taurus (Bovine).